The following is a 671-amino-acid chain: cGMP-dependent protein kinase 1 (671 aa).

Ser2 is subject to N-acetylserine. The stretch at Ser2–Thr59 forms a coiled coil. Positions Ser2–Asp102 are required for dimerization. Residues Ala9–Gln44 are leucine-zipper. An autoinhibitory domain region spans residues Pro50–His75. Phosphothreonine; by autocatalysis is present on Thr59. The cGMP-binding, high affinity stretch occupies residues Phe103 to Pro220. Residues Gly167–Ala170, Arg177–Thr178, Arg282, Gly291–Ala294, Arg301–Thr302, and Tyr336 each bind 3',5'-cyclic GMP. The cGMP-binding, low affinity stretch occupies residues Thr221–Ala341. Residues Phe360–Phe619 form the Protein kinase domain. ATP contacts are provided by residues Leu366–Val374 and Lys390. The active-site Proton acceptor is the Asp484. Phosphothreonine is present on Thr515. The AGC-kinase C-terminal domain maps to Glu620 to Phe671. The disordered stretch occupies residues Pro635 to Phe671. The segment covering Phe652–Pro661 has biased composition (acidic residues).

Belongs to the protein kinase superfamily. AGC Ser/Thr protein kinase family. cGMP subfamily. In terms of assembly, isoform alpha: parallel homodimer or heterodimer and also heterotetramer. Interacts directly with PPP1R12A. Non-covalent dimer of dimer of PRKG1-PRKG1 and PPP1R12A-PPP1R12A. This interaction targets PRKG1 to stress fibers to mediate smooth muscle cell relaxation and vasodilation in responses to rises in cGMP. Isoform beta: antiparallel homodimer. Part of cGMP kinase signaling complex at least composed of ACTA2/alpha-actin, CNN1/calponin H1, PLN/phospholamban, PRKG1 and ITPR1. Interacts with IRAG1. Forms a stable complex with ITPR1, IRAG1, and isoform beta of PRKG1. Interacts with TRPC7 (via ankyrin repeat domain). Isoform alpha interacts with RGS2. Interacts with GTF2I. Post-translationally, autophosphorylation increases kinase activity. 65 kDa monomer is produced by proteolytic cleavage. Detected in cerebellum, hippocampus, dorsomedial hypothalamus, medulla, subcommissural organ, cerebral cortex, amygdala, habenulae, various hypothalamic regions, olfactory bulb, pituitary gland, and retina. Isoform alpha is prominent in the cerebellum and medulla, whereas isoform Beta is predominant in the cortex, hippocampus, hypothalamus, and olfactory bulb.

The protein localises to the cytoplasm. The catalysed reaction is L-seryl-[protein] + ATP = O-phospho-L-seryl-[protein] + ADP + H(+). It catalyses the reaction L-threonyl-[protein] + ATP = O-phospho-L-threonyl-[protein] + ADP + H(+). With respect to regulation, in the absence of cGMP, PRKG1 activity is suppressed by autoinhibitory contacts. Functionally, serine/threonine protein kinase that acts as a key mediator of the nitric oxide (NO)/cGMP signaling pathway. GMP binding activates PRKG1, which phosphorylates serines and threonines on many cellular proteins. Numerous protein targets for PRKG1 phosphorylation are implicated in modulating cellular calcium, but the contribution of each of these targets may vary substantially among cell types. Proteins that are phosphorylated by PRKG1 regulate platelet activation and adhesion, smooth muscle contraction, cardiac function, gene expression, feedback of the NO-signaling pathway, and other processes involved in several aspects of the CNS like axon guidance, hippocampal and cerebellar learning, circadian rhythm and nociception. Smooth muscle relaxation is mediated through lowering of intracellular free calcium, by desensitization of contractile proteins to calcium, and by decrease in the contractile state of smooth muscle or in platelet activation. Regulates intracellular calcium levels via several pathways: phosphorylates IRAG1 and inhibits IP3-induced Ca(2+) release from intracellular stores, phosphorylation of KCNMA1 (BKCa) channels decreases intracellular Ca(2+) levels, which leads to increased opening of this channel. PRKG1 phosphorylates the canonical transient receptor potential channel (TRPC) family which inactivates the associated inward calcium current. Another mode of action of NO/cGMP/PKGI signaling involves PKGI-mediated inactivation of the Ras homolog gene family member A (RhoA). Phosphorylation of RHOA by PRKG1 blocks the action of this protein in myriad processes: regulation of RHOA translocation; decreasing contraction; controlling vesicle trafficking, reduction of myosin light chain phosphorylation resulting in vasorelaxation. Activation of PRKG1 by NO signaling also alters gene expression in a number of tissues. In smooth muscle cells, increased cGMP and PRKG1 activity influence expression of smooth muscle-specific contractile proteins, levels of proteins in the NO/cGMP signaling pathway, down-regulation of the matrix proteins osteopontin and thrombospondin-1 to limit smooth muscle cell migration and phenotype. Regulates vasodilator-stimulated phosphoprotein (VASP) functions in platelets and smooth muscle. This Mus musculus (Mouse) protein is cGMP-dependent protein kinase 1 (Prkg1).